The sequence spans 398 residues: Bifunctional enzyme IspD/IspF (398 aa).

A 2-C-methyl-D-erythritol 4-phosphate cytidylyltransferase region spans residues 1–234 (MPNPPRTAAI…SRLTALLGDI (234 aa)). The tract at residues 235–398 (RTGTGYDVHA…LPWGAEGLAG (164 aa)) is 2-C-methyl-D-erythritol 2,4-cyclodiphosphate synthase. Positions 241 and 243 each coordinate a divalent metal cation. 4-CDP-2-C-methyl-D-erythritol 2-phosphate-binding positions include 241–243 (DVH) and 267–268 (HS). Position 275 (histidine 275) interacts with a divalent metal cation. 4-CDP-2-C-methyl-D-erythritol 2-phosphate contacts are provided by residues 289–291 (DIG), 365–368 (TTSE), phenylalanine 372, and arginine 375.

This sequence in the N-terminal section; belongs to the IspD/TarI cytidylyltransferase family. IspD subfamily. The protein in the C-terminal section; belongs to the IspF family. It depends on a divalent metal cation as a cofactor.

The enzyme catalyses 2-C-methyl-D-erythritol 4-phosphate + CTP + H(+) = 4-CDP-2-C-methyl-D-erythritol + diphosphate. It carries out the reaction 4-CDP-2-C-methyl-D-erythritol 2-phosphate = 2-C-methyl-D-erythritol 2,4-cyclic diphosphate + CMP. It participates in isoprenoid biosynthesis; isopentenyl diphosphate biosynthesis via DXP pathway; isopentenyl diphosphate from 1-deoxy-D-xylulose 5-phosphate: step 2/6. It functions in the pathway isoprenoid biosynthesis; isopentenyl diphosphate biosynthesis via DXP pathway; isopentenyl diphosphate from 1-deoxy-D-xylulose 5-phosphate: step 4/6. Functionally, bifunctional enzyme that catalyzes the formation of 4-diphosphocytidyl-2-C-methyl-D-erythritol from CTP and 2-C-methyl-D-erythritol 4-phosphate (MEP) (IspD), and catalyzes the conversion of 4-diphosphocytidyl-2-C-methyl-D-erythritol 2-phosphate (CDP-ME2P) to 2-C-methyl-D-erythritol 2,4-cyclodiphosphate (ME-CPP) with a corresponding release of cytidine 5-monophosphate (CMP) (IspF). This chain is Bifunctional enzyme IspD/IspF, found in Rhodopseudomonas palustris (strain BisB5).